The following is a 527-amino-acid chain: Laccase-5 (527 aa).

The first 23 residues, 1–23 (MGKFHSFVNVVALSLSLSGRVFG), serve as a signal peptide directing secretion. A Plastocyanin-like 1 domain is found at 25–150 (IGPVTDLTIS…DGLRGPLVVY (126 aa)). Residues asparagine 74 and asparagine 77 are each glycosylated (N-linked (GlcNAc...) asparagine). Cu cation-binding residues include histidine 87, histidine 89, histidine 132, and histidine 134. 2 cysteine pairs are disulfide-bonded: cysteine 108-cysteine 516 and cysteine 140-cysteine 230. Residues asparagine 156, asparagine 209, asparagine 233, asparagine 242, asparagine 276, asparagine 317, asparagine 358, asparagine 366, asparagine 393, and asparagine 402 are each glycosylated (N-linked (GlcNAc...) asparagine). A Plastocyanin-like 2 domain is found at 162–306 (VDDDTTVITL…GGVNSAILRY (145 aa)). The Plastocyanin-like 3 domain maps to 373-498 (TVPVLLQILS…AGFAIVFAED (126 aa)). Cu cation-binding residues include histidine 425, histidine 428, histidine 430, histidine 480, cysteine 481, histidine 482, and histidine 486.

Belongs to the multicopper oxidase family. Requires Cu cation as cofactor.

It is found in the secreted. It catalyses the reaction 4 hydroquinone + O2 = 4 benzosemiquinone + 2 H2O. In terms of biological role, lignin degradation and detoxification of lignin-derived products. The polypeptide is Laccase-5 (LCC5) (Trametes versicolor (White-rot fungus)).